The following is a 353-amino-acid chain: Aliphatic aldoxime dehydratase (353 aa).

Ser-219 lines the an aliphatic aldoxime pocket. A heme b-binding site is contributed by His-299. His-320 lines the an aliphatic aldoxime pocket. His-320 is an active-site residue.

The protein belongs to the heme-containing dehydratase family. As to quaternary structure, homodimer. It depends on heme b as a cofactor.

The enzyme catalyses an aliphatic aldoxime = a nitrile + H2O. Its activity is regulated as follows. Active when the heme iron is in the ferrous state. Activated by FMN, Fe(2+), Sn(2+), Na(2)SO(3), Na(2)S and vitamin K3. In terms of biological role, catalyzes the dehydration of aldoximes to their corresponding nitrile. Is active toward various arylalkyl- and alkyl-aldoximes, and to a lesser extent toward aryl-aldoximes. This is Aliphatic aldoxime dehydratase from Rhodococcus globerulus.